The following is a 41-amino-acid chain: Large ribosomal subunit protein bL36 (41 aa).

This sequence belongs to the bacterial ribosomal protein bL36 family.

The protein is Large ribosomal subunit protein bL36 of Xylella fastidiosa (strain M23).